Reading from the N-terminus, the 306-residue chain is Ribose-5-phosphate isomerase (306 aa).

A disordered region spans residues 45–68; sequence GRAQFGVGSTSTSSGDANSVCPAP. Residues 51-61 are compositionally biased toward polar residues; that stretch reads VGSTSTSSGDA. Ser102 carries the phosphoserine modification.

It belongs to the ribose 5-phosphate isomerase family.

The enzyme catalyses aldehydo-D-ribose 5-phosphate = D-ribulose 5-phosphate. It participates in carbohydrate degradation; pentose phosphate pathway; D-ribose 5-phosphate from D-ribulose 5-phosphate (non-oxidative stage): step 1/1. The protein is Ribose-5-phosphate isomerase of Sus scrofa (Pig).